A 131-amino-acid polypeptide reads, in one-letter code: UPF0102 protein Ent638_3585 (131 aa).

The interval 1-20 (MAQIPAGADRPGKLSRKQTG) is disordered.

This sequence belongs to the UPF0102 family.

The protein is UPF0102 protein Ent638_3585 of Enterobacter sp. (strain 638).